A 150-amino-acid chain; its full sequence is 3-hydroxyacyl-[acyl-carrier-protein] dehydratase FabZ (150 aa).

His-54 is an active-site residue.

This sequence belongs to the thioester dehydratase family. FabZ subfamily.

The protein resides in the cytoplasm. It catalyses the reaction a (3R)-hydroxyacyl-[ACP] = a (2E)-enoyl-[ACP] + H2O. In terms of biological role, involved in unsaturated fatty acids biosynthesis. Catalyzes the dehydration of short chain beta-hydroxyacyl-ACPs and long chain saturated and unsaturated beta-hydroxyacyl-ACPs. This Colwellia psychrerythraea (strain 34H / ATCC BAA-681) (Vibrio psychroerythus) protein is 3-hydroxyacyl-[acyl-carrier-protein] dehydratase FabZ.